The following is a 1537-amino-acid chain: DNA excision repair protein ERCC-6-like 2 (1537 aa).

The Helicase ATP-binding domain maps to tyrosine 134–glycine 319. An ATP-binding site is contributed by aspartate 147 to threonine 154. Residues aspartate 270–histidine 273 carry the DEAH box motif. A Helicase C-terminal domain is found at valine 510–lysine 660. Disordered regions lie at residues lysine 715–threonine 735 and serine 749–threonine 768. The segment covering glycine 755 to aspartate 764 has biased composition (basic and acidic residues). Positions proline 772–serine 783 match the Atypical PIP-box motif. Disordered stretches follow at residues lysine 791–proline 811, serine 833–aspartate 891, and glutamate 918–leucine 948. Over residues glutamate 834 to leucine 857 the composition is skewed to basic and acidic residues. Phosphoserine is present on residues serine 968 and serine 971. The disordered stretch occupies residues valine 1274 to aspartate 1306. Basic and acidic residues predominate over residues lysine 1276–leucine 1292. Polar residues predominate over residues asparagine 1295 to aspartate 1306.

The protein belongs to the SNF2/RAD54 helicase family. Interacts with NEK6. Interacts (via an atypical PIP-box) with PCNA; this interaction facilitates cenrtomeric localization of ERCC6L2. Interacts with CYREN; this interaction is DNA independent. Interacts with XRCC6 and XRCC5. Post-translationally, phosphorylated by NEK6.

The protein resides in the nucleus. The protein localises to the cytoplasm. It localises to the cytoskeleton. It is found in the microtubule organizing center. Its subcellular location is the centrosome. The protein resides in the mitochondrion. The protein localises to the chromosome. It localises to the centromere. In terms of biological role, promotes double-strand break (DSB) end-joining and facilitates programmed recombination by controlling how DNA ends are joined in a spatially oriented manner during repair. Also plays a role in DNA repair by restricting DNA end resection in double strand break (DSB) repair. Facilitates replication of complex DNA regions and regulates the maintenance of chromatin structure. In Mus musculus (Mouse), this protein is DNA excision repair protein ERCC-6-like 2.